The following is a 238-amino-acid chain: MGIPVEVLTKFIGQKVKDVYGRDAGVIVHVYTEIDGTITGIELFKGEEIKTYSPNSVKVDGDSVVILPDWKTDSLKVLGQMEKIRKRQRALEELYSRQEIPKSTYEDMKRKLDSELLKIRDEHSRLKGRLKDRLNSIEDQVAQIDRAMIALKINYISGEIPELAYKNSMEILRLSRDSYALERDDIKKTLDKLDGLDKEVIELKPSASLNTSTEQSNKNEGNKSEVSVPIPVRVINTL.

Interacts with CdvB.

Its subcellular location is the cytoplasm. It localises to the nucleoid. It is found in the cell membrane. In terms of biological role, part of a cell division machinery. The CdvA, CdvB and CdvC proteins polymerize between segregating nucleoids and persist throughout cell division, forming a successively smaller structure during constriction. CdvA is a membrane interacting protein that recruits ESCRT-III homologs to the membrane. In Sulfolobus acidocaldarius (strain ATCC 33909 / DSM 639 / JCM 8929 / NBRC 15157 / NCIMB 11770), this protein is Cell division protein A.